The sequence spans 1147 residues: Disease resistance protein RPP4 (1147 aa).

The TIR domain maps to 11-175 (RRYDVFPSFS…KIANDVSNKL (165 aa)). Residue E86 is part of the active site. The 258-residue stretch at 189–446 (EDHIKAIKSI…CFFNGFKVSN (258 aa)) folds into the NB-ARC domain. 18 LRR repeats span residues 548-573 (MRNL…LWSK), 584-606 (PLKL…TFKA), 608-629 (YLVN…TLPL), 630-653 (GSLK…SLAI), 655-676 (LEEL…IQNA), 698-721 (MCNL…IYLP), 722-743 (RKLK…NFKA), 744-766 (EYLV…TQPL), 767-790 (GSLK…SLAI), 792-813 (LERL…IQNA), 814-836 (TKLI…DLNL), 837-860 (ESLE…KMGC), 926-950 (LGSL…SKAT), 952-973 (LKRL…IGNL), 974-996 (HRLV…DVNL), 997-1017 (SSLI…PLIS), 1018-1042 (TRIE…DLTR), and 1044-1064 (SVLL…IFRL).

Interacts with RSH1.

It catalyses the reaction NAD(+) + H2O = ADP-D-ribose + nicotinamide + H(+). TIR-NB-LRR receptor-like protein that confers resistance to the pathogen Hyaloperonospora arabidopsis isolates Emoy2 and Emwa1 (downy mildew disease). Plays a role in the regulation of temperature response during plant growth and survival. This Arabidopsis thaliana (Mouse-ear cress) protein is Disease resistance protein RPP4.